Consider the following 125-residue polypeptide: YGINYYQHRLAVPINNQFIPYPNYAKPVAIRLHAQIPQCQALPNIDPPTVERRPRPRPSFIAIPPKKTQDKTVIPAINTVATVEPPVIPTAEPVVNTVVIAEASSEFITTSTPETTTVQITSTEI.

Residues 42–63 are disordered; sequence LPNIDPPTVERRPRPRPSFIAI. Threonine 97 is a glycosylation site (O-linked (GalNAc...) threonine). The residue at position 104 (serine 104) is a Phosphoserine; alternate. A glycan (O-linked (GalNAc...) serine; alternate) is linked at serine 104. The O-linked (GalNAc...) threonine glycan is linked to threonine 121. The residue at position 122 (serine 122) is a Phosphoserine.

This sequence belongs to the kappa-casein family. In terms of tissue distribution, mammary gland specific. Secreted in milk.

Its subcellular location is the secreted. Its function is as follows. Kappa-casein stabilizes micelle formation, preventing casein precipitation in milk. The protein is Kappa-casein (CSN3) of Lama guanicoe (Guanaco).